The primary structure comprises 159 residues: 2-C-methyl-D-erythritol 2,4-cyclodiphosphate synthase (159 aa).

A divalent metal cation is bound by residues Asp-10 and His-12. 4-CDP-2-C-methyl-D-erythritol 2-phosphate is bound by residues 10–12 and 36–37; these read DVH and HS. His-44 lines the a divalent metal cation pocket. 4-CDP-2-C-methyl-D-erythritol 2-phosphate contacts are provided by residues 58 to 60, 63 to 67, 102 to 108, 134 to 137, Phe-141, and Arg-144; these read DIG, FPDTD, AQAPKMA, and TTTE.

The protein belongs to the IspF family. As to quaternary structure, homotrimer. A divalent metal cation is required as a cofactor.

The enzyme catalyses 4-CDP-2-C-methyl-D-erythritol 2-phosphate = 2-C-methyl-D-erythritol 2,4-cyclic diphosphate + CMP. The protein operates within isoprenoid biosynthesis; isopentenyl diphosphate biosynthesis via DXP pathway; isopentenyl diphosphate from 1-deoxy-D-xylulose 5-phosphate: step 4/6. Involved in the biosynthesis of isopentenyl diphosphate (IPP) and dimethylallyl diphosphate (DMAPP), two major building blocks of isoprenoid compounds. Catalyzes the conversion of 4-diphosphocytidyl-2-C-methyl-D-erythritol 2-phosphate (CDP-ME2P) to 2-C-methyl-D-erythritol 2,4-cyclodiphosphate (ME-CPP) with a corresponding release of cytidine 5-monophosphate (CMP). The sequence is that of 2-C-methyl-D-erythritol 2,4-cyclodiphosphate synthase from Shewanella frigidimarina (strain NCIMB 400).